Reading from the N-terminus, the 351-residue chain is Fe-S cluster assembly protein DRE2 (351 aa).

The interval 1 to 151 (MATTGRVLLL…KPDIGAQQAI (151 aa)) is N-terminal SAM-like domain. The interval 93–118 (RNRENKPWGLSDGNGNNANSSRRYND) is disordered. The segment covering 105–114 (GNGNNANSSR) has biased composition (polar residues). The segment at 152–243 (PLKLGRRRKE…EDELLDEDDM (92 aa)) is linker. Residues Cys-253, Cys-264, Cys-267, and Cys-269 each contribute to the [2Fe-2S] cluster site. The tract at residues 253 to 269 (CRPKPGKRRRACKDCSC) is fe-S binding site A. Residues Cys-314, Cys-317, Cys-325, and Cys-328 each coordinate [4Fe-4S] cluster. 2 consecutive short sequence motifs (cx2C motif) follow at residues 314 to 317 (CGNC) and 325 to 328 (CDGC). Residues 314 to 328 (CGNCSLGDAFRCDGC) form a fe-S binding site B region.

The protein belongs to the anamorsin family. As to quaternary structure, monomer. Interacts with TAH18. Interacts with MIA40. The cofactor is [2Fe-2S] cluster. It depends on [4Fe-4S] cluster as a cofactor.

It is found in the cytoplasm. It localises to the mitochondrion intermembrane space. In terms of biological role, component of the cytosolic iron-sulfur (Fe-S) protein assembly (CIA) machinery required for the maturation of extramitochondrial Fe-S proteins. Part of an electron transfer chain functioning in an early step of cytosolic Fe-S biogenesis, facilitating the de novo assembly of a [4Fe-4S] cluster on the scaffold complex CFD1-NBP35. Electrons are transferred to DRE2 from NADPH via the FAD- and FMN-containing protein TAH18. TAH18-DRE2 are also required for the assembly of the diferric tyrosyl radical cofactor of ribonucleotide reductase (RNR), probably by providing electrons for reduction during radical cofactor maturation in the catalytic small subunit RNR2. The chain is Fe-S cluster assembly protein DRE2 from Ajellomyces capsulatus (strain H143) (Darling's disease fungus).